Here is an 81-residue protein sequence, read N- to C-terminus: Sulfur carrier protein TusA (81 aa).

Cysteine 19 serves as the catalytic Cysteine persulfide intermediate.

The protein belongs to the sulfur carrier protein TusA family. As to quaternary structure, interacts with IscS.

Its subcellular location is the cytoplasm. The protein operates within tRNA modification. In terms of biological role, sulfur carrier protein involved in sulfur trafficking in the cell. Part of a sulfur-relay system required for 2-thiolation during synthesis of 2-thiouridine of the modified wobble base 5-methylaminomethyl-2-thiouridine (mnm(5)s(2)U) in tRNA. Interacts with IscS and stimulates its cysteine desulfurase activity. Accepts an activated sulfur from IscS, which is then transferred to TusD, and thus determines the direction of sulfur flow from IscS to 2-thiouridine formation. Also appears to be involved in sulfur transfer for the biosynthesis of molybdopterin. The sequence is that of Sulfur carrier protein TusA from Escherichia coli (strain SMS-3-5 / SECEC).